Reading from the N-terminus, the 552-residue chain is Dihydroxy-acid dehydratase (552 aa).

Residue D78 coordinates Mg(2+). C119 contacts [2Fe-2S] cluster. Residues D120 and K121 each coordinate Mg(2+). K121 carries the N6-carboxylysine modification. [2Fe-2S] cluster is bound at residue C191. E442 lines the Mg(2+) pocket. Residue S468 is the Proton acceptor of the active site.

This sequence belongs to the IlvD/Edd family. Homodimer. Requires [2Fe-2S] cluster as cofactor. Mg(2+) is required as a cofactor.

The enzyme catalyses (2R)-2,3-dihydroxy-3-methylbutanoate = 3-methyl-2-oxobutanoate + H2O. It catalyses the reaction (2R,3R)-2,3-dihydroxy-3-methylpentanoate = (S)-3-methyl-2-oxopentanoate + H2O. It functions in the pathway amino-acid biosynthesis; L-isoleucine biosynthesis; L-isoleucine from 2-oxobutanoate: step 3/4. It participates in amino-acid biosynthesis; L-valine biosynthesis; L-valine from pyruvate: step 3/4. Functions in the biosynthesis of branched-chain amino acids. Catalyzes the dehydration of (2R,3R)-2,3-dihydroxy-3-methylpentanoate (2,3-dihydroxy-3-methylvalerate) into 2-oxo-3-methylpentanoate (2-oxo-3-methylvalerate) and of (2R)-2,3-dihydroxy-3-methylbutanoate (2,3-dihydroxyisovalerate) into 2-oxo-3-methylbutanoate (2-oxoisovalerate), the penultimate precursor to L-isoleucine and L-valine, respectively. In Clostridium botulinum (strain Eklund 17B / Type B), this protein is Dihydroxy-acid dehydratase.